The primary structure comprises 318 residues: Energy-coupling factor transporter ATP-binding protein EcfA2 (318 aa).

In terms of domain architecture, ABC transporter spans 22–271 (LRAQGLKCVF…PEIMQTTSIA (250 aa)). 59-66 (GNSGSGKS) contributes to the ATP binding site.

This sequence belongs to the ABC transporter superfamily. Energy-coupling factor EcfA family. Forms a stable energy-coupling factor (ECF) transporter complex composed of 2 membrane-embedded substrate-binding proteins (S component), 2 ATP-binding proteins (A component) and 2 transmembrane proteins (T component).

It localises to the cell membrane. In terms of biological role, ATP-binding (A) component of a common energy-coupling factor (ECF) ABC-transporter complex. Unlike classic ABC transporters this ECF transporter provides the energy necessary to transport a number of different substrates. In Mycoplasmoides gallisepticum (strain R(low / passage 15 / clone 2)) (Mycoplasma gallisepticum), this protein is Energy-coupling factor transporter ATP-binding protein EcfA2.